The following is an 88-amino-acid chain: Small ribosomal subunit protein bS16 (88 aa).

It belongs to the bacterial ribosomal protein bS16 family.

In Sorangium cellulosum (strain So ce56) (Polyangium cellulosum (strain So ce56)), this protein is Small ribosomal subunit protein bS16.